The following is a 389-amino-acid chain: Serpin B13 (389 aa).

The protein belongs to the serpin family. Ov-serpin subfamily.

Its subcellular location is the cytoplasm. In terms of biological role, may play a role in the proliferation or differentiation of keratinocytes. The sequence is that of Serpin B13 (Serpinb13) from Mus musculus (Mouse).